A 344-amino-acid chain; its full sequence is Holliday junction branch migration complex subunit RuvB (344 aa).

The interval 1–185 (MTERSDRDVS…FGFTAHMDFY (185 aa)) is large ATPase domain (RuvB-L). Residues leucine 24, arginine 25, glycine 66, lysine 69, threonine 70, serine 71, 132-134 (EDF), arginine 175, tyrosine 185, and arginine 222 each bind ATP. Threonine 70 is a Mg(2+) binding site. The small ATPAse domain (RuvB-S) stretch occupies residues 186–256 (EPAELERVLA…VAKAALEVYD (71 aa)). Residues 259–344 (ELGLDRLDRA…VGASQPGLFE (86 aa)) form a head domain (RuvB-H) region. DNA is bound by residues arginine 314 and arginine 319.

This sequence belongs to the RuvB family. As to quaternary structure, homohexamer. Forms an RuvA(8)-RuvB(12)-Holliday junction (HJ) complex. HJ DNA is sandwiched between 2 RuvA tetramers; dsDNA enters through RuvA and exits via RuvB. An RuvB hexamer assembles on each DNA strand where it exits the tetramer. Each RuvB hexamer is contacted by two RuvA subunits (via domain III) on 2 adjacent RuvB subunits; this complex drives branch migration. In the full resolvosome a probable DNA-RuvA(4)-RuvB(12)-RuvC(2) complex forms which resolves the HJ.

The protein resides in the cytoplasm. It catalyses the reaction ATP + H2O = ADP + phosphate + H(+). The RuvA-RuvB-RuvC complex processes Holliday junction (HJ) DNA during genetic recombination and DNA repair, while the RuvA-RuvB complex plays an important role in the rescue of blocked DNA replication forks via replication fork reversal (RFR). RuvA specifically binds to HJ cruciform DNA, conferring on it an open structure. The RuvB hexamer acts as an ATP-dependent pump, pulling dsDNA into and through the RuvAB complex. RuvB forms 2 homohexamers on either side of HJ DNA bound by 1 or 2 RuvA tetramers; 4 subunits per hexamer contact DNA at a time. Coordinated motions by a converter formed by DNA-disengaged RuvB subunits stimulates ATP hydrolysis and nucleotide exchange. Immobilization of the converter enables RuvB to convert the ATP-contained energy into a lever motion, pulling 2 nucleotides of DNA out of the RuvA tetramer per ATP hydrolyzed, thus driving DNA branch migration. The RuvB motors rotate together with the DNA substrate, which together with the progressing nucleotide cycle form the mechanistic basis for DNA recombination by continuous HJ branch migration. Branch migration allows RuvC to scan DNA until it finds its consensus sequence, where it cleaves and resolves cruciform DNA. The chain is Holliday junction branch migration complex subunit RuvB from Mycobacterium tuberculosis (strain ATCC 25177 / H37Ra).